Here is a 94-residue protein sequence, read N- to C-terminus: Pyrimidine/purine nucleoside phosphorylase (94 aa).

This sequence belongs to the nucleoside phosphorylase PpnP family.

It carries out the reaction a purine D-ribonucleoside + phosphate = a purine nucleobase + alpha-D-ribose 1-phosphate. The catalysed reaction is adenosine + phosphate = alpha-D-ribose 1-phosphate + adenine. It catalyses the reaction cytidine + phosphate = cytosine + alpha-D-ribose 1-phosphate. The enzyme catalyses guanosine + phosphate = alpha-D-ribose 1-phosphate + guanine. It carries out the reaction inosine + phosphate = alpha-D-ribose 1-phosphate + hypoxanthine. The catalysed reaction is thymidine + phosphate = 2-deoxy-alpha-D-ribose 1-phosphate + thymine. It catalyses the reaction uridine + phosphate = alpha-D-ribose 1-phosphate + uracil. The enzyme catalyses xanthosine + phosphate = alpha-D-ribose 1-phosphate + xanthine. Functionally, catalyzes the phosphorolysis of diverse nucleosides, yielding D-ribose 1-phosphate and the respective free bases. Can use uridine, adenosine, guanosine, cytidine, thymidine, inosine and xanthosine as substrates. Also catalyzes the reverse reactions. The sequence is that of Pyrimidine/purine nucleoside phosphorylase from Pseudomonas putida (strain ATCC 700007 / DSM 6899 / JCM 31910 / BCRC 17059 / LMG 24140 / F1).